The following is a 426-amino-acid chain: Tryptophan synthase beta chain (426 aa).

Lysine 108 carries the post-translational modification N6-(pyridoxal phosphate)lysine.

Belongs to the TrpB family. Tetramer of two alpha and two beta chains. Pyridoxal 5'-phosphate is required as a cofactor.

The enzyme catalyses (1S,2R)-1-C-(indol-3-yl)glycerol 3-phosphate + L-serine = D-glyceraldehyde 3-phosphate + L-tryptophan + H2O. It participates in amino-acid biosynthesis; L-tryptophan biosynthesis; L-tryptophan from chorismate: step 5/5. In terms of biological role, the beta subunit is responsible for the synthesis of L-tryptophan from indole and L-serine. This is Tryptophan synthase beta chain (trpB) from Thermoplasma volcanium (strain ATCC 51530 / DSM 4299 / JCM 9571 / NBRC 15438 / GSS1).